Reading from the N-terminus, the 225-residue chain is PKHD-type hydroxylase YbiX (225 aa).

The region spanning 78–177 (TLSTPLFNRY…RVASFMWIQS (100 aa)) is the Fe2OG dioxygenase domain. The Fe cation site is built by His-96, Asp-98, and His-158. Arg-168 contacts 2-oxoglutarate.

Fe(2+) serves as cofactor. It depends on L-ascorbate as a cofactor.

In Shigella dysenteriae serotype 1 (strain Sd197), this protein is PKHD-type hydroxylase YbiX.